We begin with the raw amino-acid sequence, 480 residues long: MNYLPIFADLRQRPVLVVGGGEVATRKIDLLQRAGAEVKIVALALAEPLAAQHQAGQVEWLAQSFTPELLSGVFLVIAATDDAELNAAVFEAANQRHLLVNVVDDQPKCTFIFPSIVDRSPLVVAISSGGQAPVLARLLREKLESLLPASLGTMAEIAGSWRDRIKTRLHSMPARRRFWERLFVGRFASLVSAGQLEQAEGELQQQLVNQQDEQQLPAAARGEVALVGAGPGDAGLLTLRGLQVMQQADVVLYDHLVSADVLDLVRRDAERICVGKRASTHSLPQGEINQLLVKLAQEGKRVVRLKGGDPFIFGRGGEELQAVAQAGITFQVVPGVTAAAGVTAYAGIPLTHRDHAQSVIFITGHCRPDGDSLDWSTLARGRQTLAIYMGTMKAAEISQQLIAHGRSAQTPVAVISRGTRHDQQVQIGTLQELEHLARQAPTPALLVIGEVVDLHHQIAWFGQTTPTVPQDSRPAVVNLA.

The precorrin-2 dehydrogenase /sirohydrochlorin ferrochelatase stretch occupies residues 1–203 (MNYLPIFADL…GQLEQAEGEL (203 aa)). Residues 22 to 23 (EV) and 43 to 44 (LA) contribute to the NAD(+) site. Position 128 is a phosphoserine (Ser128). The segment at 222-480 (GEVALVGAGP…DSRPAVVNLA (259 aa)) is uroporphyrinogen-III C-methyltransferase. An S-adenosyl-L-methionine-binding site is contributed by Pro231. Asp254 acts as the Proton acceptor in catalysis. Catalysis depends on Lys276, which acts as the Proton donor. Residues 307–309 (GGD), Ile312, 337–338 (TA), Met389, and Gly418 each bind S-adenosyl-L-methionine.

In the N-terminal section; belongs to the precorrin-2 dehydrogenase / sirohydrochlorin ferrochelatase family. The protein in the C-terminal section; belongs to the precorrin methyltransferase family.

The catalysed reaction is uroporphyrinogen III + 2 S-adenosyl-L-methionine = precorrin-2 + 2 S-adenosyl-L-homocysteine + H(+). The enzyme catalyses precorrin-2 + NAD(+) = sirohydrochlorin + NADH + 2 H(+). It carries out the reaction siroheme + 2 H(+) = sirohydrochlorin + Fe(2+). Its pathway is cofactor biosynthesis; adenosylcobalamin biosynthesis; precorrin-2 from uroporphyrinogen III: step 1/1. It functions in the pathway cofactor biosynthesis; adenosylcobalamin biosynthesis; sirohydrochlorin from precorrin-2: step 1/1. The protein operates within porphyrin-containing compound metabolism; siroheme biosynthesis; precorrin-2 from uroporphyrinogen III: step 1/1. It participates in porphyrin-containing compound metabolism; siroheme biosynthesis; siroheme from sirohydrochlorin: step 1/1. Its pathway is porphyrin-containing compound metabolism; siroheme biosynthesis; sirohydrochlorin from precorrin-2: step 1/1. Multifunctional enzyme that catalyzes the SAM-dependent methylations of uroporphyrinogen III at position C-2 and C-7 to form precorrin-2 via precorrin-1. Then it catalyzes the NAD-dependent ring dehydrogenation of precorrin-2 to yield sirohydrochlorin. Finally, it catalyzes the ferrochelation of sirohydrochlorin to yield siroheme. The protein is Siroheme synthase 1 of Pectobacterium atrosepticum (strain SCRI 1043 / ATCC BAA-672) (Erwinia carotovora subsp. atroseptica).